Consider the following 288-residue polypeptide: Acidic endochitinase SP2 (288 aa).

A signal peptide spans 1 to 27 (MTLLLKNTLYLALIISVISSFPTSLFA). At Q28 the chain carries Pyrrolidone carboxylic acid. A Chitin-binding type-1 domain is found at 28–63 (QNCGCAPNLCCSNFGFCGTGTPYCGVGNCQSGPCEG). Cystine bridges form between C30-C38, C32-C44, C37-C51, and C56-C61. Over residues 64-78 (GTPTTPTTPTTPTTP) the composition is skewed to low complexity. Positions 64–84 (GTPTTPTTPTTPTTPGTGGGG) are disordered. Positions 64–85 (GTPTTPTTPTTPTTPGTGGGGS) are hinge region (Gly/Pro/Thr-rich). A 4-hydroxyproline mark is found at P66, P69, P72, and P75. Tandem repeats lie at residues 67 to 69 (TTP), 70 to 72 (TTP), 73 to 75 (TTP), and 76 to 78 (TTP). The 4 X 3 AA tandem repeats of T-T-P stretch occupies residues 67-78 (TTPTTPTTPTTP). A catalytic region spans residues 86 to 288 (SVSDIVSQAF…GVAPGDNLTC (203 aa)). 3 disulfide bridges follow: C107–C154, C168–C178, and C256–C288. Catalysis depends on E149, which acts as the Proton donor.

It belongs to the glycosyl hydrolase 19 family. Chitinase class I subfamily. In terms of processing, O-glycosylated on hydroxyprolines; contains xylose. As to expression, localized to infected area.

Its subcellular location is the secreted. It is found in the extracellular space. It carries out the reaction Random endo-hydrolysis of N-acetyl-beta-D-glucosaminide (1-&gt;4)-beta-linkages in chitin and chitodextrins.. Defense against chitin-containing fungal pathogens. The chain is Acidic endochitinase SP2 (SP2) from Beta vulgaris (Sugar beet).